Reading from the N-terminus, the 577-residue chain is Acyl-coenzyme A synthetase ACSM2A, mitochondrial (577 aa).

Residues 1–46 constitute a mitochondrion transit peptide; the sequence is MHWLRKVQGLCTLWGTQMSSRTLYINSRQLVSLQWGHQEVPAKFNF. CoA is bound at residue Gln-139. ATP is bound by residues 221–229, 359–364, Asp-446, and Arg-461; these read TSGTSGLPK and ESYGQT. Thr-364 provides a ligand contact to substrate. 469–471 is a binding site for CoA; sequence SGY. Arg-472 contacts substrate. Arg-501 contributes to the CoA binding site. Ser-513 bears the Phosphoserine mark. Residues Lys-532 and 540–542 each bind CoA; that span reads YPR. An ATP-binding site is contributed by Lys-557.

It belongs to the ATP-dependent AMP-binding enzyme family. Monomer. Mg(2+) is required as a cofactor. It depends on Mn(2+) as a cofactor.

It localises to the mitochondrion. The catalysed reaction is a medium-chain fatty acid + ATP + CoA = a medium-chain fatty acyl-CoA + AMP + diphosphate. It carries out the reaction benzoate + ATP + CoA = benzoyl-CoA + AMP + diphosphate. The enzyme catalyses hexanoate + ATP + CoA = hexanoyl-CoA + AMP + diphosphate. It catalyses the reaction butanoate + ATP + CoA = butanoyl-CoA + AMP + diphosphate. The catalysed reaction is octanoate + ATP + CoA = octanoyl-CoA + AMP + diphosphate. It carries out the reaction decanoate + ATP + CoA = decanoyl-CoA + AMP + diphosphate. Its function is as follows. Catalyzes the activation of fatty acids by CoA to produce an acyl-CoA, the first step in fatty acid metabolism. Capable of activating medium-chain fatty acids (e.g. butyric (C4) to decanoic (C10) acids), and certain carboxylate-containing xenobiotics, e.g. benzoate. This chain is Acyl-coenzyme A synthetase ACSM2A, mitochondrial (ACSM2A), found in Homo sapiens (Human).